Here is a 453-residue protein sequence, read N- to C-terminus: Probable glycine dehydrogenase (decarboxylating) subunit 1 (453 aa).

This sequence belongs to the GcvP family. N-terminal subunit subfamily. As to quaternary structure, the glycine cleavage system is composed of four proteins: P, T, L and H. In this organism, the P 'protein' is a heterodimer of two subunits.

The enzyme catalyses N(6)-[(R)-lipoyl]-L-lysyl-[glycine-cleavage complex H protein] + glycine + H(+) = N(6)-[(R)-S(8)-aminomethyldihydrolipoyl]-L-lysyl-[glycine-cleavage complex H protein] + CO2. Its function is as follows. The glycine cleavage system catalyzes the degradation of glycine. The P protein binds the alpha-amino group of glycine through its pyridoxal phosphate cofactor; CO(2) is released and the remaining methylamine moiety is then transferred to the lipoamide cofactor of the H protein. This is Probable glycine dehydrogenase (decarboxylating) subunit 1 from Dictyoglomus turgidum (strain DSM 6724 / Z-1310).